The primary structure comprises 207 residues: MEKFTVLTGIAAPLPMINIDTDMIIPKQFLKTIKRTGLGKNLFDEMRFLEDGAENPDFILNKAAWRKATILVTGANFGCGSSREHAPWALLDFGIRCVIAPSFADIFFNNCFKNGILPIALPQVEIDKLLDDAGRGSNATLTVDLENQVIRGPDGGQIAFEIDAFRKHCLLNGLDDIGLTLQKGDKIDDFERTRAMSSPWLPIAKAV.

This sequence belongs to the LeuD family. LeuD type 1 subfamily. Heterodimer of LeuC and LeuD.

It carries out the reaction (2R,3S)-3-isopropylmalate = (2S)-2-isopropylmalate. It functions in the pathway amino-acid biosynthesis; L-leucine biosynthesis; L-leucine from 3-methyl-2-oxobutanoate: step 2/4. Catalyzes the isomerization between 2-isopropylmalate and 3-isopropylmalate, via the formation of 2-isopropylmaleate. The chain is 3-isopropylmalate dehydratase small subunit from Rhodospirillum rubrum (strain ATCC 11170 / ATH 1.1.1 / DSM 467 / LMG 4362 / NCIMB 8255 / S1).